Consider the following 632-residue polypeptide: Probable potassium transport system protein Kup 2 (632 aa).

Transmembrane regions (helical) follow at residues 19 to 39, 58 to 78, 110 to 130, 147 to 167, 178 to 198, 216 to 236, 257 to 277, 290 to 310, 347 to 367, 377 to 397, 404 to 424, and 429 to 449; these read FWGL…TSPL, MIVL…VTAK, MFLM…SMIT, PALE…LFAV, AFGP…IVHI, FLLS…LAVT, WLFF…ALVL, MVPE…TVIA, IYLP…VLLF, YGIA…VVIW, AAVA…FFSA, and LFEG…TIWT.

Belongs to the HAK/KUP transporter (TC 2.A.72) family.

It is found in the cell inner membrane. It catalyses the reaction K(+)(in) + H(+)(in) = K(+)(out) + H(+)(out). Functionally, transport of potassium into the cell. Likely operates as a K(+):H(+) symporter. This is Probable potassium transport system protein Kup 2 from Bradyrhizobium sp. (strain BTAi1 / ATCC BAA-1182).